The following is a 284-amino-acid chain: Nucleoid occlusion protein (284 aa).

Residues 143–162 (EALAQRVGKSQSAIANKMRL) constitute a DNA-binding region (H-T-H motif).

The protein belongs to the ParB family.

It localises to the cytoplasm. Its subcellular location is the nucleoid. In terms of biological role, effects nucleoid occlusion by binding relatively nonspecifically to DNA and preventing the assembly of the division machinery in the vicinity of the nucleoid, especially under conditions that disturb the cell cycle. It helps to coordinate cell division and chromosome segregation by preventing the formation of the Z ring through the nucleoid, which would cause chromosome breakage. The protein is Nucleoid occlusion protein of Listeria monocytogenes serovar 1/2a (strain ATCC BAA-679 / EGD-e).